A 414-amino-acid polypeptide reads, in one-letter code: HERV-H LTR-associating protein 2 (414 aa).

Positions 1–22 are cleaved as a signal peptide; the sequence is MKAQTALSFFLILITSLSGSQG. The Ig-like V-type 1 domain maps to 61–131; sequence IHWKYQDSYK…YVGTAIQVIT (71 aa). Residues Asn90 and Asn103 are each glycosylated (N-linked (GlcNAc...) asparagine). An Ig-like C1-type domain is found at 138 to 222; the sequence is VGVFLTPVMK…ENSLLKQTWT (85 aa). Cystine bridges form between Cys159-Cys210 and Cys243-Cys317. Positions 235 to 328 constitute an Ig-like V-type 2 domain; it reads QSEHVSLSCQ…ISSDEYTLLT (94 aa). An N-linked (GlcNAc...) asparagine glycan is attached at Asn318. The helical transmembrane segment at 345 to 365 threads the bilayer; sequence KGLWILVPSAILAAFLLIWSV. Residues 383-414 are disordered; it reads GAQQERCCVPPGERCPSAPDNGEENVPLSGKV.

In terms of assembly, interacts with TMIGD2. As to expression, expressed at high levels in colon, kidney, testis, lung and pancreas, and at lower levels in small intestine, liver and skeletal muscle. In immune cells, highly expressed in B-cells, dendritic cells and macrophages. Not detected in T-cells.

Its subcellular location is the membrane. Its function is as follows. Through interaction with TMIGD2, costimulates T-cells in the context of TCR-mediated activation. Enhances T-cell proliferation and cytokine production via an AKT-dependent signaling cascade. The sequence is that of HERV-H LTR-associating protein 2 (HHLA2) from Homo sapiens (Human).